The following is a 372-amino-acid chain: E3 ubiquitin-protein ligase RNF34 (372 aa).

An FYVE-type zinc finger spans residues 56–107; the sequence is EGPNIVCKACGLSFSVFRKKHVCCDCKKDFCSVCSVLQENLRRCSTCHLLQE. An SAP 1 domain is found at 115–134; that stretch reads LMRLKVKDLRQYLILRNIPI. At serine 169 the chain carries Phosphoserine. Residues 194–253 form a disordered region; that stretch reads QGELMDGDQTSRSGVPAQVQSEITSANTEDDDDDDDEDDDDEEENAEDRNPGLSKERVRA. Positions 201 to 220 are enriched in polar residues; that stretch reads DQTSRSGVPAQVQSEITSAN. Residues 221-239 are compositionally biased toward acidic residues; it reads TEDDDDDDDEDDDDEEENA. The segment covering 240-252 has biased composition (basic and acidic residues); that stretch reads EDRNPGLSKERVR. Serine 254 and serine 256 each carry phosphoserine. Positions 264-278 constitute an SAP 2 domain; that stretch reads VEGMSVRQLKEILAR. Residues 325–360 form an RING-type zinc finger; the sequence is CRICMDAVIDCVLLECGHMVTCTKCGKRMSECPICR.

In terms of assembly, interacts with CASP8 and CASP10. Interacts (via RING-type zinc finger) with PPARGC1A. Interacts with NOD1. Interacts with p53/TP53; involved in p53/TP53 ubiquitination. Interacts (via RING-type zinc finger) with MDM2; the interaction stabilizes MDM2. Post-translationally, autoubiquitinated (in vitro). Proteolytically cleaved by caspases upon induction of apoptosis by TNF. As to expression, ubiquitous. Detected in heart, brain, liver, skeletal muscle, kidney, pancreas, spleen, thymus, prostate, testis, ovary, colon and leukocytes.

The protein resides in the cell membrane. It is found in the endomembrane system. Its subcellular location is the nucleus. The protein localises to the nucleus speckle. It localises to the cytoplasm. The protein resides in the cytosol. The enzyme catalyses S-ubiquitinyl-[E2 ubiquitin-conjugating enzyme]-L-cysteine + [acceptor protein]-L-lysine = [E2 ubiquitin-conjugating enzyme]-L-cysteine + N(6)-ubiquitinyl-[acceptor protein]-L-lysine.. It participates in protein modification; protein ubiquitination. Its function is as follows. E3 ubiquitin-protein ligase that regulates several biological processes through the ubiquitin-mediated proteasomal degradation of various target proteins. Ubiquitinates the caspases CASP8 and CASP10, promoting their proteasomal degradation, to negatively regulate cell death downstream of death domain receptors in the extrinsic pathway of apoptosis. May mediate 'Lys-48'-linked polyubiquitination of RIPK1 and its subsequent proteasomal degradation thereby indirectly regulating the tumor necrosis factor-mediated signaling pathway. Negatively regulates p53/TP53 through its direct ubiquitination and targeting to proteasomal degradation. Indirectly, may also negatively regulate p53/TP53 through ubiquitination and degradation of SFN. Mediates PPARGC1A proteasomal degradation probably through ubiquitination thereby indirectly regulating the metabolism of brown fat cells. Possibly involved in innate immunity, through 'Lys-48'-linked polyubiquitination of NOD1 and its subsequent proteasomal degradation. The protein is E3 ubiquitin-protein ligase RNF34 of Homo sapiens (Human).